The chain runs to 258 residues: Phosphoribosylaminoimidazole-succinocarboxamide synthase (258 aa).

The protein belongs to the SAICAR synthetase family.

The catalysed reaction is 5-amino-1-(5-phospho-D-ribosyl)imidazole-4-carboxylate + L-aspartate + ATP = (2S)-2-[5-amino-1-(5-phospho-beta-D-ribosyl)imidazole-4-carboxamido]succinate + ADP + phosphate + 2 H(+). It participates in purine metabolism; IMP biosynthesis via de novo pathway; 5-amino-1-(5-phospho-D-ribosyl)imidazole-4-carboxamide from 5-amino-1-(5-phospho-D-ribosyl)imidazole-4-carboxylate: step 1/2. In Maricaulis maris (strain MCS10) (Caulobacter maris), this protein is Phosphoribosylaminoimidazole-succinocarboxamide synthase.